Reading from the N-terminus, the 197-residue chain is Imidazoleglycerol-phosphate dehydratase (197 aa).

The protein belongs to the imidazoleglycerol-phosphate dehydratase family.

The protein resides in the cytoplasm. It carries out the reaction D-erythro-1-(imidazol-4-yl)glycerol 3-phosphate = 3-(imidazol-4-yl)-2-oxopropyl phosphate + H2O. Its pathway is amino-acid biosynthesis; L-histidine biosynthesis; L-histidine from 5-phospho-alpha-D-ribose 1-diphosphate: step 6/9. The protein is Imidazoleglycerol-phosphate dehydratase of Hahella chejuensis (strain KCTC 2396).